A 227-amino-acid chain; its full sequence is MQATKTGNASTVFVVDDEASVRDSLTWLLNSISLDVRTFESAKDFLDADISCTHGCVVLDVRMQNVSGLQLQQALSERGFKLPIIFLSAYGDAQMGAQAVKKGAFDFLQKPYRNQDLLDAVNAALALNREMADKQNEKQKHLDLLATLSQREMEILDKVVAGSSSKEIAKLLGISYKTVEAHRGRIISKLGLKSTGDLMHFVMRGSSHCSDCGRQPLPGSSPCRPAA.

The Response regulatory domain occupies 11-125; that stretch reads TVFVVDDEAS…DLLDAVNAAL (115 aa). Asp-60 bears the 4-aspartylphosphate mark. In terms of domain architecture, HTH luxR-type spans 141 to 206; it reads HLDLLATLSQ…DLMHFVMRGS (66 aa). Positions 165–184 form a DNA-binding region, H-T-H motif; sequence SKEIAKLLGISYKTVEAHRG.

In terms of processing, phosphorylated by TdiS.

Its function is as follows. Member of the two-component regulatory system TdiR/TdiS, which probably regulates transcription of toluene catabolic genes (bss operon). Binds to DNA. This Thauera aromatica protein is Transcriptional regulatory protein TdiR (tdiR).